The primary structure comprises 169 residues: Putative phosphoesterase BLi01284/BL02661 (169 aa).

The active-site Proton donor is the histidine 34. 2 short sequence motifs (HXTX) span residues 34 to 37 (HLTL) and 115 to 118 (HVTV). Histidine 115 serves as the catalytic Proton acceptor.

This sequence belongs to the 2H phosphoesterase superfamily. YjcG family.

The polypeptide is Putative phosphoesterase BLi01284/BL02661 (Bacillus licheniformis (strain ATCC 14580 / DSM 13 / JCM 2505 / CCUG 7422 / NBRC 12200 / NCIMB 9375 / NCTC 10341 / NRRL NRS-1264 / Gibson 46)).